Here is a 33-residue protein sequence, read N- to C-terminus: Cytochrome b6-f complex subunit 8 (33 aa).

Residues 2–22 traverse the membrane as a helical segment; the sequence is LFTVAWASLAAMFSFSIAMVV.

The protein belongs to the PetN family. The 4 large subunits of the cytochrome b6-f complex are cytochrome b6, subunit IV (17 kDa polypeptide, PetD), cytochrome f and the Rieske protein, while the 4 small subunits are PetG, PetL, PetM and PetN. The complex functions as a dimer.

It is found in the cellular thylakoid membrane. Functionally, component of the cytochrome b6-f complex, which mediates electron transfer between photosystem II (PSII) and photosystem I (PSI), cyclic electron flow around PSI, and state transitions. The chain is Cytochrome b6-f complex subunit 8 from Synechococcus sp. (strain CC9902).